A 384-amino-acid polypeptide reads, in one-letter code: SAGA complex subunit Spt3 (384 aa).

Belongs to the SPT3 family. Component of the Spt-Ada-Gcn5 acetyltransferase (SAGA) complex consisting of wda/Taf5L, Saf6, Taf9, Taf10b, Taf12, Ada1, Spt3, Spt7, Spt20, Sf3b3, Sf3b5, Nipped-A/Tra1, a histone acetyltransferase (HAT) module made up of Gcn5, Ada2b (Isoform B), Ada3 and Sgf29, and a deubiquitinase (DUB) module made up of not/nonstop, Sgf11 and e(y)2 tethered to SAGA by Atxn7. Taf5 and Taf10, which has partially redundant properties with Taf10b, may also be part of this complex.

Its subcellular location is the nucleus. It localises to the chromosome. Its function is as follows. Component of the transcription regulatory complex SAGA, a multiprotein complex that activates transcription by remodeling chromatin and mediating histone acetylation and deubiquitination. The SAGA complex predominantly acetylates histone H3. Required for oogenesis; involved in transcriptional activation. This Drosophila melanogaster (Fruit fly) protein is SAGA complex subunit Spt3.